The primary structure comprises 69 residues: Conotoxin AbVIE (69 aa).

Residues 1 to 17 (VLIIAVLFLTACQLTTA) form the signal peptide. Residues 18–40 (ETSSRGKQKHRALRSTDKYSRMT) constitute a propeptide that is removed on maturation. 3 disulfide bridges follow: C43-C57, C50-C61, and C56-C66.

The protein belongs to the conotoxin O1 superfamily. As to expression, expressed by the venom duct.

It localises to the secreted. The chain is Conotoxin AbVIE from Conus abbreviatus (Abbreviated cone).